The chain runs to 241 residues: MIITMLDAQQLSKSYTLAGKRTINILQGVTLRVHEGEMVTIVGASGSGKTTLLNLLGTLDTPDSGTIVFNNQPLFQNNRYTLSRKALAAFRNRQIGFVFQFHHLLSDFTALENVAMAEFIATGNLQAAKVRAAELLTNFGLSERLDHLPSELSGGEQQRVAIARALMNNPKLVLADEPSGNLDQRNSQLLYELMARISKEQRTAFIIVTHNYDYAAMADRCFCMENGLLGEYKSYEKSTAV.

The ABC transporter domain occupies 6-241 (LDAQQLSKSY…YKSYEKSTAV (236 aa)). 43–50 (GASGSGKT) is a binding site for ATP.

The protein belongs to the ABC transporter superfamily. Lipoprotein translocase (TC 3.A.1.125) family. As to quaternary structure, the complex is composed of two ATP-binding proteins (LolD) and two transmembrane proteins (LolC and LolE).

It is found in the cell inner membrane. Its function is as follows. Part of the ABC transporter complex LolCDE involved in the translocation of mature outer membrane-directed lipoproteins, from the inner membrane to the periplasmic chaperone, LolA. Responsible for the formation of the LolA-lipoprotein complex in an ATP-dependent manner. This chain is Lipoprotein-releasing system ATP-binding protein LolD 2, found in Chlorobium chlorochromatii (strain CaD3).